A 232-amino-acid polypeptide reads, in one-letter code: Large ribosomal subunit protein uL1 (232 aa).

This sequence belongs to the universal ribosomal protein uL1 family. Part of the 50S ribosomal subunit.

Functionally, binds directly to 23S rRNA. The L1 stalk is quite mobile in the ribosome, and is involved in E site tRNA release. Protein L1 is also a translational repressor protein, it controls the translation of the L11 operon by binding to its mRNA. The protein is Large ribosomal subunit protein uL1 of Chlamydia trachomatis serovar L2 (strain ATCC VR-902B / DSM 19102 / 434/Bu).